Consider the following 162-residue polypeptide: Ubiquitin-fold modifier-conjugating enzyme 1 (162 aa).

The active-site Glycyl thioester intermediate is the Cys-115.

The protein belongs to the ubiquitin-conjugating enzyme family. UFC1 subfamily. As to quaternary structure, interacts with uba-5. In terms of tissue distribution, expressed in the intestine.

E2-like enzyme which forms an intermediate with ufm-1. The intermediate is formed via a thioester linkage. The sequence is that of Ubiquitin-fold modifier-conjugating enzyme 1 from Caenorhabditis elegans.